A 74-amino-acid chain; its full sequence is U3-agatoxin-Ao1h (74 aa).

An N-terminal signal peptide occupies residues 1 to 20 (MRAIISLLLISTMVFGVIEA). The propeptide occupies 21–34 (VSVQKSLKIFEGER). 4 cysteine pairs are disulfide-bonded: Cys-37/Cys-53, Cys-44/Cys-58, Cys-52/Cys-68, and Cys-60/Cys-66. The residue at position 72 (Asn-72) is an Asparagine amide.

This sequence belongs to the neurotoxin 07 (Beta/delta-agtx) family. 03 (aga-4) subfamily. Aga sub-subfamily. In terms of tissue distribution, expressed by the venom gland.

The protein resides in the secreted. In terms of biological role, insecticidal neurotoxin that induces an irreversible spastic paralysis when injected into insects. Modifies presynaptic voltage-gated sodium channels (Nav), causing them to open at the normal resting potential of the nerve. This leads to spontaneous release of neurotransmitter and repetitive action potentials in motor neurons. The sequence is that of U3-agatoxin-Ao1h from Agelena orientalis (Funnel-web spider).